The following is a 167-amino-acid chain: 2-amino-4-hydroxy-6-hydroxymethyldihydropteridine pyrophosphokinase (167 aa).

Belongs to the HPPK family.

It catalyses the reaction 6-hydroxymethyl-7,8-dihydropterin + ATP = (7,8-dihydropterin-6-yl)methyl diphosphate + AMP + H(+). Its pathway is cofactor biosynthesis; tetrahydrofolate biosynthesis; 2-amino-4-hydroxy-6-hydroxymethyl-7,8-dihydropteridine diphosphate from 7,8-dihydroneopterin triphosphate: step 4/4. Functionally, catalyzes the transfer of pyrophosphate from adenosine triphosphate (ATP) to 6-hydroxymethyl-7,8-dihydropterin, an enzymatic step in folate biosynthesis pathway. In Bacillus subtilis (strain 168), this protein is 2-amino-4-hydroxy-6-hydroxymethyldihydropteridine pyrophosphokinase (folK).